Consider the following 463-residue polypeptide: Chaperone SurA (463 aa).

An N-terminal signal peptide occupies residues 1-25; it reads MTRYFSIVLSLLLAVSCVFLPVASA. PpiC domains are found at residues 175 to 277 and 291 to 390; these read GAQY…KLVE and ATEY…QRLG. The segment at 439 to 463 is disordered; that stretch reads ADDHHTPSAAVTPATGAVLPAATKH.

The protein localises to the periplasm. The enzyme catalyses [protein]-peptidylproline (omega=180) = [protein]-peptidylproline (omega=0). Functionally, chaperone involved in the correct folding and assembly of outer membrane proteins. Recognizes specific patterns of aromatic residues and the orientation of their side chains, which are found more frequently in integral outer membrane proteins. May act in both early periplasmic and late outer membrane-associated steps of protein maturation. The sequence is that of Chaperone SurA from Xylella fastidiosa (strain Temecula1 / ATCC 700964).